We begin with the raw amino-acid sequence, 294 residues long: tRNA-cytidine(32) 2-sulfurtransferase (294 aa).

Residues 58–63 carry the PP-loop motif motif; it reads SGGKDS. [4Fe-4S] cluster is bound by residues cysteine 133, cysteine 136, and cysteine 224.

The protein belongs to the TtcA family. As to quaternary structure, homodimer. The cofactor is Mg(2+). [4Fe-4S] cluster is required as a cofactor.

Its subcellular location is the cytoplasm. It carries out the reaction cytidine(32) in tRNA + S-sulfanyl-L-cysteinyl-[cysteine desulfurase] + AH2 + ATP = 2-thiocytidine(32) in tRNA + L-cysteinyl-[cysteine desulfurase] + A + AMP + diphosphate + H(+). It participates in tRNA modification. In terms of biological role, catalyzes the ATP-dependent 2-thiolation of cytidine in position 32 of tRNA, to form 2-thiocytidine (s(2)C32). The sulfur atoms are provided by the cysteine/cysteine desulfurase (IscS) system. In Ruegeria pomeroyi (strain ATCC 700808 / DSM 15171 / DSS-3) (Silicibacter pomeroyi), this protein is tRNA-cytidine(32) 2-sulfurtransferase.